The chain runs to 132 residues: MTGELEVKNMDMKPGSTLKITGSIADGTDGFVINLGQGTDKLNLHFNPRFSESTIVCNSLDGSNWGQEQREDHLCFSPGSEVKFTVTFESDKFKVKLPDGHELTFPNRLGHSHLSYLSVRGGFNMSSFKLKE.

One can recognise a Galectin domain in the interval Glu4–Lys131. Trp65 to Glu71 contributes to the a beta-D-galactoside binding site.

As to quaternary structure, homodimer.

In terms of biological role, this protein binds beta-galactoside. Its physiological function is not yet known. In Homo sapiens (Human), this protein is Galectin-2 (LGALS2).